The primary structure comprises 432 residues: Homogentisate 1,2-dioxygenase (432 aa).

His287 acts as the Proton acceptor in catalysis. The Fe cation site is built by His330 and Glu336. Residues Tyr345 and His366 each coordinate homogentisate. Residue His366 participates in Fe cation binding.

It belongs to the homogentisate dioxygenase family. Hexamer; dimer of trimers. The cofactor is Fe cation.

It carries out the reaction homogentisate + O2 = 4-maleylacetoacetate + H(+). It functions in the pathway amino-acid degradation; L-phenylalanine degradation; acetoacetate and fumarate from L-phenylalanine: step 4/6. In terms of biological role, involved in the catabolism of homogentisate (2,5-dihydroxyphenylacetate or 2,5-OH-PhAc), a central intermediate in the degradation of phenylalanine and tyrosine. Catalyzes the oxidative ring cleavage of the aromatic ring of homogentisate to yield maleylacetoacetate. In Pseudomonas aeruginosa (strain ATCC 15692 / DSM 22644 / CIP 104116 / JCM 14847 / LMG 12228 / 1C / PRS 101 / PAO1), this protein is Homogentisate 1,2-dioxygenase.